The primary structure comprises 288 residues: Acetyl-coenzyme A carboxylase carboxyl transferase subunit beta (288 aa).

Residues 34–288 (LFAKCPACKH…HLVAFHGGGQ (255 aa)) form the CoA carboxyltransferase N-terminal domain. Residues Cys-38, Cys-41, Cys-56, and Cys-59 each contribute to the Zn(2+) site. The C4-type zinc-finger motif lies at 38-59 (CPACKHMIYKKDLGLAKICPTC).

It belongs to the AccD/PCCB family. In terms of assembly, acetyl-CoA carboxylase is a heterohexamer composed of biotin carboxyl carrier protein (AccB), biotin carboxylase (AccC) and two subunits each of ACCase subunit alpha (AccA) and ACCase subunit beta (AccD). Zn(2+) is required as a cofactor.

The protein localises to the cytoplasm. The enzyme catalyses N(6)-carboxybiotinyl-L-lysyl-[protein] + acetyl-CoA = N(6)-biotinyl-L-lysyl-[protein] + malonyl-CoA. It participates in lipid metabolism; malonyl-CoA biosynthesis; malonyl-CoA from acetyl-CoA: step 1/1. Component of the acetyl coenzyme A carboxylase (ACC) complex. Biotin carboxylase (BC) catalyzes the carboxylation of biotin on its carrier protein (BCCP) and then the CO(2) group is transferred by the transcarboxylase to acetyl-CoA to form malonyl-CoA. In Streptococcus pyogenes serotype M4 (strain MGAS10750), this protein is Acetyl-coenzyme A carboxylase carboxyl transferase subunit beta.